A 213-amino-acid chain; its full sequence is Pyrrolidone-carboxylate peptidase (213 aa).

Residues glutamate 78, cysteine 141, and histidine 165 contribute to the active site.

Belongs to the peptidase C15 family. In terms of assembly, homotetramer.

It localises to the cytoplasm. It carries out the reaction Release of an N-terminal pyroglutamyl group from a polypeptide, the second amino acid generally not being Pro.. Functionally, removes 5-oxoproline from various penultimate amino acid residues except L-proline. The chain is Pyrrolidone-carboxylate peptidase from Clostridium perfringens (strain 13 / Type A).